The sequence spans 239 residues: Tetraspanin-9 (239 aa).

3 helical membrane passes run 14–34, 56–76, and 86–106; these read FLFN…GIWL, LVIA…LGAI, and FFIV…LFFV. 2 N-linked (GlcNAc...) asparagine glycosylation sites follow: Asn180 and Asn181. A helical membrane pass occupies residues 204–224; it reads VLGTVGMCLLITQILGMAFSM.

Belongs to the tetraspanin (TM4SF) family. As to quaternary structure, found in a complex with GP6. In terms of processing, glycosylated.

It localises to the membrane. In Ovis aries (Sheep), this protein is Tetraspanin-9 (TSPAN9).